The following is a 302-amino-acid chain: Bifunctional ligase/repressor BirA (302 aa).

The H-T-H motif DNA-binding region spans 14-33; the sequence is QPKVRSELEKFSKNLEEDIQ. One can recognise a BPL/LPL catalytic domain in the interval 62-236; that stretch reads QISTALFPYS…HLYTRLNIFE (175 aa). Biotin is bound by residues 80-82, glutamine 103, 107-109, and lysine 167; these read STN and RGR.

This sequence belongs to the biotin--protein ligase family.

It carries out the reaction biotin + L-lysyl-[protein] + ATP = N(6)-biotinyl-L-lysyl-[protein] + AMP + diphosphate + H(+). Functionally, acts both as a biotin--[acetyl-CoA-carboxylase] ligase and a biotin-operon repressor. In the presence of ATP, BirA activates biotin to form the BirA-biotinyl-5'-adenylate (BirA-bio-5'-AMP or holoBirA) complex. HoloBirA can either transfer the biotinyl moiety to the biotin carboxyl carrier protein (BCCP) subunit of acetyl-CoA carboxylase, or bind to the biotin operator site and inhibit transcription of the operon. The protein is Bifunctional ligase/repressor BirA of Haemophilus influenzae (strain ATCC 51907 / DSM 11121 / KW20 / Rd).